The following is a 318-amino-acid chain: NADH-ubiquinone oxidoreductase chain 1 (318 aa).

8 consecutive transmembrane segments (helical) span residues 3 to 23 (MVNL…LTLI), 70 to 90 (MFII…IPLP), 100 to 120 (LAVL…LWSG), 146 to 166 (LAII…STLI), 171 to 191 (HTWL…STLA), 222 to 242 (LFFM…AILF), 253 to 273 (ELYT…FLWI), and 294 to 314 (LPLT…MAGI).

Belongs to the complex I subunit 1 family.

The protein resides in the mitochondrion inner membrane. The enzyme catalyses a ubiquinone + NADH + 5 H(+)(in) = a ubiquinol + NAD(+) + 4 H(+)(out). Its function is as follows. Core subunit of the mitochondrial membrane respiratory chain NADH dehydrogenase (Complex I) that is believed to belong to the minimal assembly required for catalysis. Complex I functions in the transfer of electrons from NADH to the respiratory chain. The immediate electron acceptor for the enzyme is believed to be ubiquinone. In Pteropus vampyrus (Large flying fox), this protein is NADH-ubiquinone oxidoreductase chain 1 (MT-ND1).